Reading from the N-terminus, the 282-residue chain is Putative 1-acyl-sn-glycerol-3-phosphate acyltransferase acl-2 (282 aa).

Helical transmembrane passes span 4 to 24 and 32 to 52; these read FWSIVVFFLLSILFILYNIST and ISFYYFTILLHGMEVCVTMIP. The short motif at 98 to 103 is the HXXXXD motif element; sequence HQSSLD. Residues 122–142 traverse the membrane as a helical segment; that stretch reads ILAYVPFFNLGAYFSNTIFID.

Belongs to the 1-acyl-sn-glycerol-3-phosphate acyltransferase family.

It is found in the membrane. It carries out the reaction a 1-acyl-sn-glycero-3-phosphate + an acyl-CoA = a 1,2-diacyl-sn-glycero-3-phosphate + CoA. Its pathway is phospholipid metabolism; CDP-diacylglycerol biosynthesis; CDP-diacylglycerol from sn-glycerol 3-phosphate: step 2/3. Functionally, converts lysophosphatidic acid (LPA) into phosphatidic acid by incorporating an acyl moiety at the sn-2 position of the glycerol backbone. The chain is Putative 1-acyl-sn-glycerol-3-phosphate acyltransferase acl-2 (acl-2) from Caenorhabditis elegans.